The sequence spans 232 residues: Glycerol-3-phosphate acyltransferase (232 aa).

Transmembrane regions (helical) follow at residues 4-24, 56-76, 90-110, 124-144, 152-172, and 191-211; these read FLAI…IIAG, VVTL…VGFF, IALS…TVFA, MLIG…LLAV, VGSI…KYVF, and SLDY…IYTH.

The protein belongs to the PlsY family. In terms of assembly, probably interacts with PlsX.

It is found in the cell inner membrane. It carries out the reaction an acyl phosphate + sn-glycerol 3-phosphate = a 1-acyl-sn-glycero-3-phosphate + phosphate. It functions in the pathway lipid metabolism; phospholipid metabolism. In terms of biological role, catalyzes the transfer of an acyl group from acyl-phosphate (acyl-PO(4)) to glycerol-3-phosphate (G3P) to form lysophosphatidic acid (LPA). This enzyme utilizes acyl-phosphate as fatty acyl donor, but not acyl-CoA or acyl-ACP. The sequence is that of Glycerol-3-phosphate acyltransferase from Chlorobaculum tepidum (strain ATCC 49652 / DSM 12025 / NBRC 103806 / TLS) (Chlorobium tepidum).